The chain runs to 473 residues: Photosystem II CP43 reaction center protein (473 aa).

A propeptide spanning residues 1-14 (MKTLYSLRRSYPVE) is cleaved from the precursor. At Thr-15 the chain carries N-acetylthreonine. The residue at position 15 (Thr-15) is a Phosphothreonine. The next 5 membrane-spanning stretches (helical) occupy residues 69-93 (LFEV…PHLA), 134-155 (LIGP…KDKN), 178-200 (KALY…RKIT), 255-275 (KPFA…LSYS), and 291-312 (WFNN…ASQA). Position 367 (Glu-367) interacts with [CaMn4O5] cluster. Residues 447 to 471 (RARAAAAGFEKGIDRDTEPVLFMNP) traverse the membrane as a helical segment.

It belongs to the PsbB/PsbC family. PsbC subfamily. PSII is composed of 1 copy each of membrane proteins PsbA, PsbB, PsbC, PsbD, PsbE, PsbF, PsbH, PsbI, PsbJ, PsbK, PsbL, PsbM, PsbT, PsbX, PsbY, PsbZ, Psb30/Ycf12, at least 3 peripheral proteins of the oxygen-evolving complex and a large number of cofactors. It forms dimeric complexes. Binds multiple chlorophylls and provides some of the ligands for the Ca-4Mn-5O cluster of the oxygen-evolving complex. It may also provide a ligand for a Cl- that is required for oxygen evolution. PSII binds additional chlorophylls, carotenoids and specific lipids. is required as a cofactor.

It localises to the plastid. The protein localises to the chloroplast thylakoid membrane. One of the components of the core complex of photosystem II (PSII). It binds chlorophyll and helps catalyze the primary light-induced photochemical processes of PSII. PSII is a light-driven water:plastoquinone oxidoreductase, using light energy to abstract electrons from H(2)O, generating O(2) and a proton gradient subsequently used for ATP formation. The protein is Photosystem II CP43 reaction center protein of Zygnema circumcarinatum (Green alga).